A 176-amino-acid chain; its full sequence is Large ribosomal subunit protein uL6 (176 aa).

The protein belongs to the universal ribosomal protein uL6 family. In terms of assembly, part of the 50S ribosomal subunit.

This protein binds to the 23S rRNA, and is important in its secondary structure. It is located near the subunit interface in the base of the L7/L12 stalk, and near the tRNA binding site of the peptidyltransferase center. This chain is Large ribosomal subunit protein uL6, found in Thiobacillus denitrificans (strain ATCC 25259 / T1).